Here is a 153-residue protein sequence, read N- to C-terminus: MNVGVAHSEVNPNTRVMNSRGMWLTYALGVGLLHIVLLSIPFFSVPVAWTLTNIIHNLGMYVFLHAVKGTPFETPDQGKARLLTHWEQLDYGVQFTSSRKFFTISPIILYFLASFYTKYDPTHFILNTASLLSVLIPKMPQLHGVRIFGINKY.

The Cytoplasmic portion of the chain corresponds to 1 to 26 (MNVGVAHSEVNPNTRVMNSRGMWLTY). 2 helical membrane passes run 27-46 (ALGV…FSVP) and 47-64 (VAWT…YVFL). Topologically, residues 65–100 (HAVKGTPFETPDQGKARLLTHWEQLDYGVQFTSSRK) are cytoplasmic. The helical transmembrane segment at 101 to 121 (FFTISPIILYFLASFYTKYDP) threads the bilayer. Residues 122–123 (TH) lie on the Extracellular side of the membrane. The helical transmembrane segment at 124-140 (FILNTASLLSVLIPKMP) threads the bilayer. The Cytoplasmic portion of the chain corresponds to 141-153 (QLHGVRIFGINKY).

It belongs to the ORM family. Ceramide-sensitive subunit of the serine palmitoyltransferase (SPT) complex, which is also composed of SPTLC1, SPTLC2/3 and SPTSSA/B. In terms of tissue distribution, widely expressed. Expressed in adult and fetal heart, brain, lung, liver, skeletal muscle and kidney. Expressed in adult pancreas and placenta and in fetal spleen abd thymus. Expressed at intermediate level in pancreas, placenta and brain but low in skeletal muscle and lung.

It is found in the endoplasmic reticulum membrane. Plays an essential role in the homeostatic regulation of sphingolipid de novo biosynthesis by modulating the activity of the serine palmitoyltransferase (SPT) in response to ceramide levels. When complexed to SPT, the binding of ceramides to its N-terminus stabilizes a conformation that block SPT substrate entry, hence preventing SPT catalytic activity. Through this mechanism, maintains ceramide levels at sufficient concentrations for the production of complex sphingolipids, but which prevents the accumulation of ceramides to levels that trigger apoptosis. This is ORM1-like protein 1 (ORMDL1) from Homo sapiens (Human).